The chain runs to 502 residues: MSIKAEEISTLIKQQIENYQSEIEVHDVGTVIQVGDGIARVHGLDNCMAGELVEFSNGVLGLAQNLEESNVGIVILGPYKDIREGDEVKRTGRIMEVPVGEELLGRVVNPLGQPVDGMGPVLTSKTRPIESPAPGVMDRKSVHEPLQTGIKSIDALIPIGRGQRELIIGDRQTGKTSIAIDTILNQKDQDMICIYVAIGQKESTVRGVVETLRKHGALDYTIVVTASASQPAPLLYLAPYAGVAMGEEFMYNGKHVLVVYDDLSKQATAYRELSLLLRRPPGREAFPGDVFYLHSRLLERAAKLSDAKGGGSLTALPFVETQAGDISAYIPTNVISITDGQIFLQSDLFFSGVRPAVNPGLSVSRVGGSAQIKAMKKVAGTLRLDLASYRELEAFAQFGSDLDKATQAKLNRGARTVEVLKQDLHKPLRVEKQVAILYALTRGFLDDVPVEDIKRFEEELFMYLDQNHKDLLDSIAQTGNLPADEDMKGAIEGFKRTFAPSN.

Positions 117–139 are disordered; it reads GMGPVLTSKTRPIESPAPGVMDR. 169 to 176 contacts ATP; it reads GDRQTGKT.

The protein belongs to the ATPase alpha/beta chains family. F-type ATPases have 2 components, CF(1) - the catalytic core - and CF(0) - the membrane proton channel. CF(1) has five subunits: alpha(3), beta(3), gamma(1), delta(1), epsilon(1). CF(0) has three main subunits: a(1), b(2) and c(9-12). The alpha and beta chains form an alternating ring which encloses part of the gamma chain. CF(1) is attached to CF(0) by a central stalk formed by the gamma and epsilon chains, while a peripheral stalk is formed by the delta and b chains.

It is found in the cell membrane. The catalysed reaction is ATP + H2O + 4 H(+)(in) = ADP + phosphate + 5 H(+)(out). Functionally, produces ATP from ADP in the presence of a proton gradient across the membrane. The alpha chain is a regulatory subunit. The protein is ATP synthase subunit alpha of Bacillus licheniformis (strain ATCC 14580 / DSM 13 / JCM 2505 / CCUG 7422 / NBRC 12200 / NCIMB 9375 / NCTC 10341 / NRRL NRS-1264 / Gibson 46).